A 272-amino-acid polypeptide reads, in one-letter code: GTP cyclohydrolase FolE2 (272 aa).

Belongs to the GTP cyclohydrolase IV family.

The catalysed reaction is GTP + H2O = 7,8-dihydroneopterin 3'-triphosphate + formate + H(+). The protein operates within cofactor biosynthesis; 7,8-dihydroneopterin triphosphate biosynthesis; 7,8-dihydroneopterin triphosphate from GTP: step 1/1. Converts GTP to 7,8-dihydroneopterin triphosphate. The sequence is that of GTP cyclohydrolase FolE2 from Aromatoleum aromaticum (strain DSM 19018 / LMG 30748 / EbN1) (Azoarcus sp. (strain EbN1)).